Reading from the N-terminus, the 119-residue chain is Large ribosomal subunit protein uL18 (119 aa).

This sequence belongs to the universal ribosomal protein uL18 family. As to quaternary structure, part of the 50S ribosomal subunit; part of the 5S rRNA/L5/L18/L25 subcomplex. Contacts the 5S and 23S rRNAs.

Functionally, this is one of the proteins that bind and probably mediate the attachment of the 5S RNA into the large ribosomal subunit, where it forms part of the central protuberance. The sequence is that of Large ribosomal subunit protein uL18 from Clostridium botulinum (strain Alaska E43 / Type E3).